We begin with the raw amino-acid sequence, 420 residues long: Gamma-glutamyl phosphate reductase (420 aa).

Belongs to the gamma-glutamyl phosphate reductase family.

The protein localises to the cytoplasm. The enzyme catalyses L-glutamate 5-semialdehyde + phosphate + NADP(+) = L-glutamyl 5-phosphate + NADPH + H(+). It participates in amino-acid biosynthesis; L-proline biosynthesis; L-glutamate 5-semialdehyde from L-glutamate: step 2/2. Functionally, catalyzes the NADPH-dependent reduction of L-glutamate 5-phosphate into L-glutamate 5-semialdehyde and phosphate. The product spontaneously undergoes cyclization to form 1-pyrroline-5-carboxylate. The polypeptide is Gamma-glutamyl phosphate reductase (Streptococcus sanguinis (strain SK36)).